The following is a 621-amino-acid chain: DnaJ homolog subfamily C member 2 (621 aa).

Position 1 is an N-acetylmethionine (Met1). An epitope (recognized by CD8(+) cytotoxic T-lymphocytes) region spans residues 23–31 (STLCQVEPV). Ser47, Ser49, Ser60, and Ser63 each carry phosphoserine. The J domain maps to 88–161 (DHYAVLGLGH…VKRRAFNSVD (74 aa)). The segment at 160 to 250 (VDPTFDNSVP…RDERRWIEKQ (91 aa)) is ZRF1-UBD. 2 disordered regions span residues 294-315 (EKKAKAEAKRKEQEAKEKQRQA) and 426-453 (KEEAEARMRQASKNTEKSTGGGGNGSKN). 2 SANT domains span residues 449–511 (NGSK…KLDP) and 549–604 (TDFT…EMVK).

In terms of assembly, component of ribosome-associated complex (RAC), a heterodimer composed of Hsp70/DnaK-type chaperone HSPA14 and Hsp40/DnaJ-type chaperone DNAJC2. Interacts (via ZRF1-UBD region) with ID1. Post-translationally, phosphorylated in M (mitotic) phase. Widely expressed.

It is found in the nucleus. It localises to the cytoplasm. The protein resides in the cytosol. Acts both as a chaperone in the cytosol and as a chromatin regulator in the nucleus. When cytosolic, acts as a molecular chaperone: component of the ribosome-associated complex (RAC), a complex involved in folding or maintaining nascent polypeptides in a folding-competent state. In the RAC complex, stimulates the ATPase activity of the ribosome-associated pool of Hsp70-type chaperones HSPA14 that bind to the nascent polypeptide chain. When nuclear, mediates the switching from polycomb-repressed genes to an active state: specifically recruited at histone H2A ubiquitinated at 'Lys-119' (H2AK119ub), and promotes the displacement of the polycomb PRC1 complex from chromatin, thereby facilitating transcription activation. The chain is DnaJ homolog subfamily C member 2 (DNAJC2) from Homo sapiens (Human).